A 397-amino-acid chain; its full sequence is Tryptophan synthase beta chain (397 aa).

Lys-86 carries the post-translational modification N6-(pyridoxal phosphate)lysine.

This sequence belongs to the TrpB family. Tetramer of two alpha and two beta chains. Requires pyridoxal 5'-phosphate as cofactor.

The catalysed reaction is (1S,2R)-1-C-(indol-3-yl)glycerol 3-phosphate + L-serine = D-glyceraldehyde 3-phosphate + L-tryptophan + H2O. Its pathway is amino-acid biosynthesis; L-tryptophan biosynthesis; L-tryptophan from chorismate: step 5/5. The beta subunit is responsible for the synthesis of L-tryptophan from indole and L-serine. The protein is Tryptophan synthase beta chain (trpB) of Buchnera aphidicola subsp. Diuraphis noxia.